We begin with the raw amino-acid sequence, 209 residues long: Nucleoside triphosphate pyrophosphatase (209 aa).

The Proton acceptor role is filled by D74.

It belongs to the Maf family. The cofactor is a divalent metal cation.

The protein localises to the cytoplasm. It carries out the reaction a ribonucleoside 5'-triphosphate + H2O = a ribonucleoside 5'-phosphate + diphosphate + H(+). It catalyses the reaction a 2'-deoxyribonucleoside 5'-triphosphate + H2O = a 2'-deoxyribonucleoside 5'-phosphate + diphosphate + H(+). Functionally, nucleoside triphosphate pyrophosphatase. May have a dual role in cell division arrest and in preventing the incorporation of modified nucleotides into cellular nucleic acids. The chain is Nucleoside triphosphate pyrophosphatase from Neorickettsia sennetsu (strain ATCC VR-367 / Miyayama) (Ehrlichia sennetsu).